Consider the following 289-residue polypeptide: Polyisoprenoid diphosphate/phosphate phosphohydrolase PLPP6 (289 aa).

The tract at residues 1–81 (MQSPRRNAEG…SSQALPPQLP (81 aa)) is disordered. Topologically, residues 1-126 (MQSPRRNAEG…ESSSWGSMRP (126 aa)) are cytoplasmic. Serine 23, serine 30, and serine 64 each carry phosphoserine. A helical transmembrane segment spans residues 127–147 (LMKLLEISGHGIPWLLGTLYC). The Lumenal segment spans residues 148–158 (LSRSDSWAGRE). Residues 159–179 (VLMNLLFALLLDLLLVSLIKG) traverse the membrane as a helical segment. The segment at 178 to 186 (KGLVRRRRP) is phosphatase sequence motif I. At 180–222 (LVRRRRPAHNQMDMFFTISVDKYSFPSGHTTRAALVSRFILNH) the chain is on the cytoplasmic side. The interval 205 to 208 (PSGH) is phosphatase sequence motif II. The active-site Proton donors is the histidine 208. Residues 223–243 (LVLAIPLRVLVVLWAFILGLS) form a helical membrane-spanning segment. Residues 243–254 (SRVMLGRHNVTD) form a phosphatase sequence motif III region. Over 244-254 (RVMLGRHNVTD) the chain is Lumenal. The active-site Nucleophile is the histidine 250. Residues 255 to 275 (VAFGFFLGYMQYSIVDYCWLS) form a helical membrane-spanning segment. Topologically, residues 276–289 (PRTAPVLFVLWNQP) are cytoplasmic.

The protein belongs to the PA-phosphatase related phosphoesterase family. Phosphorylation by PKC activates the phosphatase activity towards presqualene diphosphate.

Its subcellular location is the endoplasmic reticulum membrane. The protein resides in the nucleus envelope. It localises to the nucleus inner membrane. It carries out the reaction presqualene diphosphate + H2O = presqualene phosphate + phosphate + H(+). It catalyses the reaction presqualene phosphate + H2O = presqualene alcohol + phosphate. The enzyme catalyses (2E,6E)-farnesyl diphosphate + H2O = (2E,6E)-farnesyl phosphate + phosphate + H(+). The catalysed reaction is (2E,6E)-farnesyl phosphate + H2O = (2E,6E)-farnesol + phosphate. It carries out the reaction (2E,6E,10E)-geranylgeranyl diphosphate + H2O = (2E,6E,10E)-geranylgeranyl phosphate + phosphate + H(+). It catalyses the reaction (2E,6E,10E)-geranylgeranyl phosphate + H2O = (2E,6E,10E)-geranylgeraniol + phosphate. The enzyme catalyses (2E)-geranyl diphosphate + H2O = (2E)-geranyl phosphate + phosphate + H(+). The catalysed reaction is (2E)-geranyl phosphate + H2O = (2E)-geraniol + phosphate. It carries out the reaction 1,2-dihexadecanoyl-sn-glycero-3-phosphate + H2O = 1,2-dihexadecanoyl-sn-glycerol + phosphate. Functionally, magnesium-independent polyisoprenoid diphosphatase that catalyzes the sequential dephosphorylation of presqualene, farnesyl, geranyl and geranylgeranyl diphosphates. Functions in the innate immune response through the dephosphorylation of presqualene diphosphate which acts as a potent inhibitor of the signaling pathways contributing to polymorphonuclear neutrophils activation. May regulate the biosynthesis of cholesterol and related sterols by dephosphorylating presqualene and farnesyl diphosphate, two key intermediates in this biosynthetic pathway. May also play a role in protein prenylation by acting on farnesyl diphosphate and its derivative geranylgeranyl diphosphate, two precursors for the addition of isoprenoid anchors to membrane proteins. Has a lower activity towards phosphatidic acid (PA), but through phosphatidic acid dephosphorylation may participate in the biosynthesis of phospholipids and triacylglycerols. May also act on ceramide-1-P, lysophosphatidic acid (LPA) and sphing-4-enine 1-phosphate/sphingosine-1-phosphate. The protein is Polyisoprenoid diphosphate/phosphate phosphohydrolase PLPP6 of Bos taurus (Bovine).